Here is a 441-residue protein sequence, read N- to C-terminus: Serine hydroxymethyltransferase (441 aa).

124–126 (GHI) contacts (6S)-5,6,7,8-tetrahydrofolate. N6-(pyridoxal phosphate)lysine is present on Lys-239.

This sequence belongs to the SHMT family. Homodimer. Pyridoxal 5'-phosphate is required as a cofactor.

It localises to the cytoplasm. It functions in the pathway amino-acid biosynthesis; glycine biosynthesis; glycine from L-serine: step 1/1. Functionally, catalyzes the reversible interconversion of serine and glycine with a modified folate serving as the one-carbon carrier. Also exhibits a pteridine-independent aldolase activity toward beta-hydroxyamino acids, producing glycine and aldehydes, via a retro-aldol mechanism. The polypeptide is Serine hydroxymethyltransferase (Cenarchaeum symbiosum (strain A)).